The sequence spans 338 residues: Nicotinate-nucleotide--dimethylbenzimidazole phosphoribosyltransferase (338 aa).

The Proton acceptor role is filled by Glu306.

This sequence belongs to the CobT family.

It carries out the reaction 5,6-dimethylbenzimidazole + nicotinate beta-D-ribonucleotide = alpha-ribazole 5'-phosphate + nicotinate + H(+). Its pathway is nucleoside biosynthesis; alpha-ribazole biosynthesis; alpha-ribazole from 5,6-dimethylbenzimidazole: step 1/2. Functionally, catalyzes the synthesis of alpha-ribazole-5'-phosphate from nicotinate mononucleotide (NAMN) and 5,6-dimethylbenzimidazole (DMB). The sequence is that of Nicotinate-nucleotide--dimethylbenzimidazole phosphoribosyltransferase from Cereibacter sphaeroides (strain ATCC 17025 / ATH 2.4.3) (Rhodobacter sphaeroides).